Here is a 292-residue protein sequence, read N- to C-terminus: Feruloyl esterase B (292 aa).

Positions 1–18 are cleaved as a signal peptide; sequence MLPRTLLGLALTAATGLC. N-linked (GlcNAc...) asparagine glycans are attached at residues Asn-88, Asn-117, Asn-179, and Asn-245.

It belongs to the carbohydrate esterase 1 (CE1) family. Feruloyl esterase type B subfamily.

The protein localises to the secreted. The catalysed reaction is feruloyl-polysaccharide + H2O = ferulate + polysaccharide.. In terms of biological role, involved in degradation of plant cell walls. Hydrolyzes of the feruloyl-arabinose ester bond in arabinoxylans as well as the feruloyl-galactose and feruloyl-arabinose ester bonds in pectin. The chain is Feruloyl esterase B (fae-1) from Neurospora crassa (strain ATCC 24698 / 74-OR23-1A / CBS 708.71 / DSM 1257 / FGSC 987).